The sequence spans 620 residues: E3 ubiquitin-protein ligase DTX1 (620 aa).

2 consecutive WWE domains span residues 14–94 (GLGF…PVRR) and 95–171 (NFYD…RLRR). Disordered stretches follow at residues 221–248 (SQRR…LAVR), 262–313 (PAAG…SIPP), and 361–391 (PPVS…KSKN). Composition is skewed to pro residues over residues 227-241 (PPAP…PGGP) and 268-280 (EPAP…PRSP). The SH3-binding signature appears at 230-233 (PPLP). Over residues 291-307 (QNNLNRPGPQRTTSVSA) the composition is skewed to polar residues. Residues 379 to 389 (RKTKKKHLKKS) show a composition bias toward basic residues. Residues 411–472 (CTICMERLVT…DGSLQCPTCK (62 aa)) form an RING-type zinc finger.

Belongs to the Deltex family. Homodimer. May form a heterodimer with other members of the Deltex family. Interacts with NOTCH1 via its N-terminal region and EIF3F, the interaction is required for NOTCH1 deubiquitination. Interacts with EP300. Forms a heterodimer with BBAP; the heterodimerization leading to an increase of in vitro ubiquitin ligase activity. Interacts with ITCH. Ubiquitinated; undergoes 'Lys-29'-linked polyubiquitination catalyzed by ITCH. Widely expressed. Strongly expressed in blood vessel. Also expressed in embryonic nervous system, pancreas, lung, adrenal gland, digestive tube and muscles. Expressed in MZB cells and developing B- and T-cells.

The protein resides in the cytoplasm. It localises to the nucleus. It catalyses the reaction S-ubiquitinyl-[E2 ubiquitin-conjugating enzyme]-L-cysteine + [acceptor protein]-L-lysine = [E2 ubiquitin-conjugating enzyme]-L-cysteine + N(6)-ubiquitinyl-[acceptor protein]-L-lysine.. Its pathway is protein modification; protein ubiquitination. Functions as a ubiquitin ligase protein in vivo, mediating ubiquitination and promoting degradation of MEKK1, suggesting that it may regulate the Notch pathway via some ubiquitin ligase activity. Regulator of Notch signaling, a signaling pathway involved in cell-cell communications that regulates a broad spectrum of cell-fate determinations. Mainly acts as a positive regulator of Notch, but it also acts as a negative regulator, depending on the developmental and cell context. Mediates the antineural activity of Notch, possibly by inhibiting the transcriptional activation mediated by MATCH1. Involved in neurogenesis, lymphogenesis and myogenesis, and may also be involved in MZB (Marginal zone B) cell differentiation. Promotes B-cell development at the expense of T-cell development, suggesting that it can antagonize NOTCH1. The polypeptide is E3 ubiquitin-protein ligase DTX1 (DTX1) (Homo sapiens (Human)).